Here is a 1249-residue protein sequence, read N- to C-terminus: Clustered mitochondria protein homolog (1249 aa).

A disordered region spans residues 1-32 (MAQTNGELEHSKETPEQLTNGNHPEETQEEDN). The region spanning 318–562 (DITRSQENYL…RVTPLDVMWQ (245 aa)) is the Clu domain. A compositionally biased stretch (basic and acidic residues) spans 605–628 (KAEADAAKAESSEATESKEQASEE). Disordered stretches follow at residues 605-636 (KAEA…DQER) and 868-903 (KAPA…AAKE). 3 TPR repeats span residues 974–1007 (AKLY…TERT), 1016–1049 (ILSY…WKII), and 1058–1091 (ITTM…CESL). The tract at residues 1174–1249 (NMNPRSLGTK…KLRGSKKSSA (76 aa)) is disordered. Residues 1176–1190 (NPRSLGTKIQPQVGQ) show a composition bias toward polar residues.

The protein belongs to the CLU family. As to quaternary structure, may associate with the eukaryotic translation initiation factor 3 (eIF-3) complex.

It localises to the cytoplasm. Functionally, mRNA-binding protein involved in proper cytoplasmic distribution of mitochondria. The protein is Clustered mitochondria protein homolog of Aspergillus niger (strain ATCC MYA-4892 / CBS 513.88 / FGSC A1513).